The sequence spans 526 residues: Bifunctional purine biosynthesis protein PurH (526 aa).

The region spanning 15–161 (DVVPIRRALI…KNHANVAIVV (147 aa)) is the MGS-like domain.

It belongs to the PurH family.

The enzyme catalyses (6R)-10-formyltetrahydrofolate + 5-amino-1-(5-phospho-beta-D-ribosyl)imidazole-4-carboxamide = 5-formamido-1-(5-phospho-D-ribosyl)imidazole-4-carboxamide + (6S)-5,6,7,8-tetrahydrofolate. It catalyses the reaction IMP + H2O = 5-formamido-1-(5-phospho-D-ribosyl)imidazole-4-carboxamide. The protein operates within purine metabolism; IMP biosynthesis via de novo pathway; 5-formamido-1-(5-phospho-D-ribosyl)imidazole-4-carboxamide from 5-amino-1-(5-phospho-D-ribosyl)imidazole-4-carboxamide (10-formyl THF route): step 1/1. It participates in purine metabolism; IMP biosynthesis via de novo pathway; IMP from 5-formamido-1-(5-phospho-D-ribosyl)imidazole-4-carboxamide: step 1/1. The polypeptide is Bifunctional purine biosynthesis protein PurH (Leifsonia xyli subsp. xyli (strain CTCB07)).